A 232-amino-acid chain; its full sequence is LOB domain-containing protein 11 (232 aa).

The interval 1 to 50 is disordered; sequence MLKMEINGGVATPTASAVAKVTETTTPVNSPSPTSSPPPPPSPQQPPQPP. Residues 34–50 show a composition bias toward pro residues; it reads TSSPPPPPSPQQPPQPP. The region spanning 54-155 is the LOB domain; sequence SPCAACKILR…AQLAKTQVEL (102 aa). The disordered stretch occupies residues 181-218; that stretch reads EQGQQKMSFESSFESGDEFISSPDEESNDLGFLEDNNN. Low complexity predominate over residues 188–202; the sequence is SFESSFESGDEFISS.

The protein belongs to the LOB domain-containing protein family. In terms of tissue distribution, expressed in young shoots, stems, leaves and flowers.

The polypeptide is LOB domain-containing protein 11 (LBD11) (Arabidopsis thaliana (Mouse-ear cress)).